The following is a 140-amino-acid chain: Endoribonuclease YbeY (140 aa).

Zn(2+) is bound by residues His-100, His-104, and His-110.

This sequence belongs to the endoribonuclease YbeY family. It depends on Zn(2+) as a cofactor.

The protein resides in the cytoplasm. In terms of biological role, single strand-specific metallo-endoribonuclease involved in late-stage 70S ribosome quality control and in maturation of the 3' terminus of the 16S rRNA. This is Endoribonuclease YbeY from Helicobacter pylori (strain P12).